A 415-amino-acid chain; its full sequence is tRNA(Ile2) 2-agmatinylcytidine synthetase TiaS (415 aa).

It belongs to the TiaS family.

Its subcellular location is the cytoplasm. The catalysed reaction is cytidine(34) in tRNA(Ile2) + agmatine + ATP + H2O = 2-agmatinylcytidine(34) in tRNA(Ile2) + AMP + 2 phosphate + 2 H(+). Its function is as follows. ATP-dependent agmatine transferase that catalyzes the formation of 2-agmatinylcytidine (agm2C) at the wobble position (C34) of tRNA(Ile2), converting the codon specificity from AUG to AUA. This is tRNA(Ile2) 2-agmatinylcytidine synthetase TiaS from Pyrobaculum neutrophilum (strain DSM 2338 / JCM 9278 / NBRC 100436 / V24Sta) (Thermoproteus neutrophilus).